The sequence spans 408 residues: 26S proteasome regulatory subunit 6B homolog (408 aa).

Ala2 is modified (N-acetylalanine). Phosphoserine is present on Ser16. Positions 28 to 75 form a coiled coil; the sequence is EDLYGRLKSLERQLEFTDIQEEYVKDEQKNLKRELLRAQEEVKRIQSV. 196–203 provides a ligand contact to ATP; sequence GPPGTGKT.

This sequence belongs to the AAA ATPase family. As to quaternary structure, component of the 19S regulatory particle (RP/PA700) base subcomplex of the 26S proteasome. The 26S proteasome is composed of a core protease (CP), known as the 20S proteasome, capped at one or both ends by the 19S regulatory particle (RP/PA700). The RP/PA700 complex is composed of at least 17 different subunits in two subcomplexes, the base and the lid, which form the portions proximal and distal to the 20S proteolytic core, respectively. Expressed in dark-grown etiolated seedlings, roots, leaves, stems and flowers.

The protein localises to the cytoplasm. The protein resides in the nucleus. The 26S proteasome is involved in the ATP-dependent degradation of ubiquitinated proteins. The regulatory (or ATPase) complex confers ATP dependency and substrate specificity to the 26S complex. The sequence is that of 26S proteasome regulatory subunit 6B homolog (RPT3) from Arabidopsis thaliana (Mouse-ear cress).